The following is a 406-amino-acid chain: Serine/threonine transporter SstT (406 aa).

The next 9 membrane-spanning stretches (helical) occupy residues 15–35 (LVLQ…VSPS), 47–67 (FVGA…AASI), 81–101 (IIAM…VLSF), 140–160 (ALMS…GLAL), 191–211 (FGIF…ALAG), 215–235 (LLVV…PAMV), 289–309 (IPLG…TLTL), 315–335 (MGIE…AVSA), and 362–382 (IAMQ…SAET).

Belongs to the dicarboxylate/amino acid:cation symporter (DAACS) (TC 2.A.23) family.

It localises to the cell inner membrane. It carries out the reaction L-serine(in) + Na(+)(in) = L-serine(out) + Na(+)(out). The catalysed reaction is L-threonine(in) + Na(+)(in) = L-threonine(out) + Na(+)(out). Involved in the import of serine and threonine into the cell, with the concomitant import of sodium (symport system). The polypeptide is Serine/threonine transporter SstT (Vibrio vulnificus (strain CMCP6)).